The sequence spans 471 residues: Histidinol dehydrogenase (471 aa).

NAD(+) is bound by residues Tyr139, Gln204, and Asn236. Residues Thr259, Gln281, and His284 each contribute to the substrate site. 2 residues coordinate Zn(2+): Gln281 and His284. Active-site proton acceptor residues include Glu350 and His351. His351, Asp384, Glu438, and His443 together coordinate substrate. Position 384 (Asp384) interacts with Zn(2+). His443 serves as a coordination point for Zn(2+).

It belongs to the histidinol dehydrogenase family. Zn(2+) serves as cofactor.

The enzyme catalyses L-histidinol + 2 NAD(+) + H2O = L-histidine + 2 NADH + 3 H(+). Its pathway is amino-acid biosynthesis; L-histidine biosynthesis; L-histidine from 5-phospho-alpha-D-ribose 1-diphosphate: step 9/9. Its function is as follows. Catalyzes the sequential NAD-dependent oxidations of L-histidinol to L-histidinaldehyde and then to L-histidine. The chain is Histidinol dehydrogenase from Bifidobacterium longum (strain NCC 2705).